We begin with the raw amino-acid sequence, 752 residues long: DNA helicase/primase complex-associated protein (752 aa).

The protein belongs to the herpesviridae HEPA family. In terms of assembly, associates with the primase and the helicase to form the helicase-primase complex. Interacts with the origin-binding protein. Interacts with the polymerase catalytic subunit.

It is found in the host nucleus. In terms of biological role, component of the helicase/primase complex. Unwinds the DNA at the replication forks and generates single-stranded DNA for both leading and lagging strand synthesis. The primase synthesizes short RNA primers on the lagging strand that the polymerase presumably elongates using dNTPs. The primase-associated factor has no known catalytic activity in the complex and may serve to facilitate the formation of the replisome by directly interacting with the origin-binding protein and the polymerase. The sequence is that of DNA helicase/primase complex-associated protein from Homo sapiens (Human).